A 254-amino-acid polypeptide reads, in one-letter code: Floral homeotic protein APETALA 1 (254 aa).

An MADS-box domain is found at 3 to 57; it reads RGRVQLKRIENKINRQVTFSKRRAGLLKKAHEISVLCDAEVALVVFSHKGKLFEY. Residues 88–178 form the K-box domain; sequence NTNWSMEYNR…SKQIKEREKI (91 aa).

It localises to the nucleus. In terms of biological role, controls floral meristem identity. Is also required for normal development of sepals and petals. Is required for the transition of an influorescence meristem into a floral meristem. Interacts with LEAFY. In Sinapis alba (White mustard), this protein is Floral homeotic protein APETALA 1 (AP1).